The primary structure comprises 569 residues: Methionine--tRNA ligase (569 aa).

Residues 11 to 21 (PYINGIKHLGN) carry the 'HIGH' region motif. The Zn(2+) site is built by Cys-143, Cys-146, Cys-156, and Cys-159. A 'KMSKS' region motif is present at residues 342–346 (KFSTS). Residue Thr-345 coordinates ATP.

This sequence belongs to the class-I aminoacyl-tRNA synthetase family. MetG type 1 subfamily. In terms of assembly, monomer. Requires Zn(2+) as cofactor.

The protein resides in the cytoplasm. It carries out the reaction tRNA(Met) + L-methionine + ATP = L-methionyl-tRNA(Met) + AMP + diphosphate. Its function is as follows. Is required not only for elongation of protein synthesis but also for the initiation of all mRNA translation through initiator tRNA(fMet) aminoacylation. This chain is Methionine--tRNA ligase, found in Caulobacter vibrioides (strain ATCC 19089 / CIP 103742 / CB 15) (Caulobacter crescentus).